The sequence spans 100 residues: Urease subunit gamma (100 aa).

This sequence belongs to the urease gamma subunit family. As to quaternary structure, heterotrimer of UreA (gamma), UreB (beta) and UreC (alpha) subunits. Three heterotrimers associate to form the active enzyme.

Its subcellular location is the cytoplasm. The enzyme catalyses urea + 2 H2O + H(+) = hydrogencarbonate + 2 NH4(+). Its pathway is nitrogen metabolism; urea degradation; CO(2) and NH(3) from urea (urease route): step 1/1. The sequence is that of Urease subunit gamma from Cyanothece sp. (strain PCC 7425 / ATCC 29141).